Reading from the N-terminus, the 227-residue chain is Pyridoxine/pyridoxamine 5'-phosphate oxidase (227 aa).

Substrate-binding positions include 23–26 (RREY) and lysine 81. FMN contacts are provided by residues 76 to 81 (RIVLLK), 91 to 92 (YT), arginine 97, lysine 98, and glutamine 120. Substrate-binding residues include tyrosine 138, arginine 142, and serine 146. FMN-binding positions include 155 to 156 (QS) and tryptophan 200. Substrate is bound at residue 206 to 208 (RLH). Arginine 210 provides a ligand contact to FMN.

The protein belongs to the pyridoxamine 5'-phosphate oxidase family. Homodimer. FMN is required as a cofactor.

The enzyme catalyses pyridoxamine 5'-phosphate + O2 + H2O = pyridoxal 5'-phosphate + H2O2 + NH4(+). It carries out the reaction pyridoxine 5'-phosphate + O2 = pyridoxal 5'-phosphate + H2O2. The protein operates within cofactor metabolism; pyridoxal 5'-phosphate salvage; pyridoxal 5'-phosphate from pyridoxamine 5'-phosphate: step 1/1. Its pathway is cofactor metabolism; pyridoxal 5'-phosphate salvage; pyridoxal 5'-phosphate from pyridoxine 5'-phosphate: step 1/1. Catalyzes the oxidation of either pyridoxine 5'-phosphate (PNP) or pyridoxamine 5'-phosphate (PMP) into pyridoxal 5'-phosphate (PLP). The protein is Pyridoxine/pyridoxamine 5'-phosphate oxidase of Pectobacterium atrosepticum (strain SCRI 1043 / ATCC BAA-672) (Erwinia carotovora subsp. atroseptica).